We begin with the raw amino-acid sequence, 732 residues long: Ets DNA-binding protein pokkuri (732 aa).

The PNT domain occupies 33–117 (SSQLAELKTQ…NVLQMLIIES (85 aa)). Positions 133-295 (SRYPLSPHSH…PPGTPILKDI (163 aa)) are disordered. The segment covering 141 to 157 (SHPPTPTWPPLNAPPEN) has biased composition (pro residues). Over residues 176–193 (NSVTLSPPPSVDSQASSP) the composition is skewed to polar residues. The span at 205-240 (GAAPGSAGGSAPAAGGATNTSNPTSSSASSTGSNGS) shows a compositional bias: low complexity. A DNA-binding region (ETS) is located at residues 396–479 (RLLWDFLQQL…QGERHCYQFL (84 aa)). Disordered stretches follow at residues 496–548 (QSTP…NGPM), 590–647 (GPPP…TATS), and 674–732 (VAAS…HMQQ). Positions 506–539 (SPSMPQGSSQAPGSPAGQNWNPQQQSQQQQQSPQ) are enriched in low complexity. The residue at position 543 (Ser-543) is a Phosphoserine. Polar residues predominate over residues 637 to 647 (LSVSSKSTATS). Phosphoserine is present on residues Ser-677, Ser-682, and Ser-696. Over residues 690 to 709 (AGASNASSSPRPMDQASEQA) the composition is skewed to polar residues.

It belongs to the ETS family. In terms of processing, phosphorylated in response to MAPK signaling. May be phosphorylated by rl. Expressed in R7 and cone cells of the eye.

The protein localises to the nucleus. In terms of biological role, ets-related protein that functions as a negative regulator of photoreceptor development acting antagonistically to pnt and the proneural signal mediated by RAS. It acts upstream of SINA to inhibit R7 development. In Drosophila melanogaster (Fruit fly), this protein is Ets DNA-binding protein pokkuri (aop).